The primary structure comprises 512 residues: 2'-5'-oligoadenylate synthase-like protein 1 (512 aa).

2 consecutive Ubiquitin-like domains span residues 351 to 430 (IQVT…ISPE) and 431 to 507 (IQVF…EGKA).

This sequence belongs to the 2-5A synthase family. In terms of assembly, specifically interacts with the ligand binding domain of the thyroid receptor (TR). TRIP14 does not require the presence of thyroid hormone for its interaction. Binds MBD1.

It localises to the nucleus. It is found in the nucleolus. The protein resides in the cytoplasm. Functionally, does not have 2'-5'-OAS activity, but can bind double-stranded RNA. Displays antiviral activity via an alternative antiviral pathway independent of RNase L. The chain is 2'-5'-oligoadenylate synthase-like protein 1 (Oasl) from Rattus norvegicus (Rat).